We begin with the raw amino-acid sequence, 576 residues long: RING finger and SPRY domain-containing protein 1 (576 aa).

A signal peptide spans 1–16 (MIVLGWAVFLASRSLG). Ser50 is subject to Phosphoserine. The segment at 50 to 99 (SGTDDSVDTQQQQAENSAVPTADTRSQPRDPVRPPRRGRGPHEPRRKKQN) is disordered. Residues 57 to 68 (DTQQQQAENSAV) show a composition bias toward polar residues. Residues 83–97 (PPRRGRGPHEPRRKK) show a composition bias toward basic residues. The region spanning 300 to 483 (LFLKEGRQLT…CEFNFGAKPF (184 aa)) is the B30.2/SPRY domain. Asn314 carries N-linked (GlcNAc...) asparagine glycosylation. The RING-type zinc finger occupies 527–562 (CSLCCDEVADTQLKPCGHSDLCMDCALQLETCPLCR).

It localises to the secreted. In Macaca fascicularis (Crab-eating macaque), this protein is RING finger and SPRY domain-containing protein 1 (RSPRY1).